The primary structure comprises 892 residues: Formin-like protein 8 (892 aa).

A signal peptide spans methionine 1–alanine 23. The interval phenylalanine 43–glycine 119 is disordered. Residues tryptophan 47–proline 59 are compositionally biased toward pro residues. The segment covering threonine 87–glycine 111 has biased composition (low complexity). The chain crosses the membrane as a helical span at residues isoleucine 126–phenylalanine 146. Positions proline 188 to lysine 457 are disordered. The span at leucine 210–proline 230 shows a compositional bias: basic and acidic residues. 3 stretches are compositionally biased toward low complexity: residues alanine 268 to serine 286, phenylalanine 297 to alanine 306, and arginine 321 to proline 330. Residues serine 339–valine 383 are compositionally biased toward pro residues. The segment covering alanine 424–methionine 436 has biased composition (polar residues). The 422-residue stretch at aspartate 446–alanine 867 folds into the FH2 domain.

Belongs to the formin-like family. Class-I subfamily.

The protein resides in the membrane. This chain is Formin-like protein 8 (FH8), found in Oryza sativa subsp. japonica (Rice).